We begin with the raw amino-acid sequence, 102 residues long: Integration host factor subunit beta (102 aa).

This sequence belongs to the bacterial histone-like protein family. As to quaternary structure, heterodimer of an alpha and a beta chain.

This protein is one of the two subunits of integration host factor, a specific DNA-binding protein that functions in genetic recombination as well as in transcriptional and translational control. This chain is Integration host factor subunit beta, found in Rhizobium rhizogenes (strain K84 / ATCC BAA-868) (Agrobacterium radiobacter).